A 72-amino-acid polypeptide reads, in one-letter code: ATP-dependent Clp protease ATP-binding subunit ClpA homolog (72 aa).

It belongs to the ClpA/ClpB family.

It localises to the plastid. Its subcellular location is the chloroplast. May interact with a ClpP-like protease involved in degradation of denatured proteins in the chloroplast. This Populus euphratica (Euphrates poplar) protein is ATP-dependent Clp protease ATP-binding subunit ClpA homolog.